Reading from the N-terminus, the 107-residue chain is U1-lycotoxin-Ls1a (107 aa).

Positions 1–20 (MMKVLVVVALLVTLISYSSS) are cleaved as a signal peptide. A propeptide spanning residues 21 to 41 (EGIDDLEADELLSLMANEQTR) is cleaved from the precursor. 4 disulfides stabilise this stretch: Cys44–Cys59, Cys51–Cys68, Cys58–Cys86, and Cys70–Cys84.

This sequence belongs to the neurotoxin 19 (CSTX) family. 04 (U1-Lctx) subfamily. As to expression, expressed by the venom gland.

The protein localises to the secreted. The protein is U1-lycotoxin-Ls1a of Lycosa singoriensis (Wolf spider).